A 345-amino-acid chain; its full sequence is Protein RecA (345 aa).

Residue Gly-80–Thr-87 participates in ATP binding.

Belongs to the RecA family.

Its subcellular location is the cytoplasm. In terms of biological role, can catalyze the hydrolysis of ATP in the presence of single-stranded DNA, the ATP-dependent uptake of single-stranded DNA by duplex DNA, and the ATP-dependent hybridization of homologous single-stranded DNAs. It interacts with LexA causing its activation and leading to its autocatalytic cleavage. This chain is Protein RecA, found in Mycoplasma mycoides subsp. mycoides SC (strain CCUG 32753 / NCTC 10114 / PG1).